The primary structure comprises 71 residues: uncharacterized protein (71 aa).

This is an uncharacterized protein from Acheta domesticus (House cricket).